The sequence spans 85 residues: Phosphocarrier protein HPr (85 aa).

The HPr domain maps to 1–85 (MFQQEVTITA…HLVKLMAELE (85 aa)). Residue histidine 15 is the Pros-phosphohistidine intermediate of the active site.

It localises to the cytoplasm. General (non sugar-specific) component of the phosphoenolpyruvate-dependent sugar phosphotransferase system (sugar PTS). This major carbohydrate active-transport system catalyzes the phosphorylation of incoming sugar substrates concomitantly with their translocation across the cell membrane. The phosphoryl group from phosphoenolpyruvate (PEP) is transferred to the phosphoryl carrier protein HPr by enzyme I. Phospho-HPr then transfers it to the PTS EIIA domain. In Klebsiella pneumoniae, this protein is Phosphocarrier protein HPr (ptsH).